The primary structure comprises 92 residues: Small ribosomal subunit protein uS19 (92 aa).

This sequence belongs to the universal ribosomal protein uS19 family.

Functionally, protein S19 forms a complex with S13 that binds strongly to the 16S ribosomal RNA. The protein is Small ribosomal subunit protein uS19 of Thermosynechococcus vestitus (strain NIES-2133 / IAM M-273 / BP-1).